Reading from the N-terminus, the 285-residue chain is MILKDSLEAKSCFKSSQTSHLAARVAMENPQKGNVINAQSSRQPSSENEFRENLFFKEMRTNGKNEHETSCRSVVLYRNSKSAKRYPLSTKCARISYMQGNKDTKTALTKKYKSNEDVSRMRKKGNKYPQCKSKNLYDSLKLEECIESWSLNQKQNENFYEHTHLNSRDDSNPSSCDRETFFLSDEDSEISLMEGLSSIENGYPDEKETLAALDNVKLSDENAAHLGYLVKYFQNYTDKIILKETLMDWEDKEPSLQELTESTKYLENLADTDHRTSNKPFLFLR.

The protein localises to the cytoplasm. Its subcellular location is the nucleus. Has a role in meiosis. In Schizosaccharomyces pombe (strain 972 / ATCC 24843) (Fission yeast), this protein is Meiotically up-regulated gene 125 protein (mug125).